Reading from the N-terminus, the 140-residue chain is Coiled-coil domain-containing protein 126 (140 aa).

Residues 1–26 (MFFTISRKNMSQKLSLLLLVFGLIWG) form the signal peptide. Residues Asn-110 and Asn-134 are each glycosylated (N-linked (GlcNAc...) asparagine). Residues 120–140 (TSGNLVPVTTNKRTNVSGSIR) form a disordered region.

The protein localises to the secreted. This is Coiled-coil domain-containing protein 126 (CCDC126) from Homo sapiens (Human).